A 305-amino-acid polypeptide reads, in one-letter code: Uracil-DNA glycosylase (305 aa).

Aspartate 148 (proton acceptor) is an active-site residue.

The protein belongs to the uracil-DNA glycosylase (UDG) superfamily. UNG family.

It localises to the host nucleus. The catalysed reaction is Hydrolyzes single-stranded DNA or mismatched double-stranded DNA and polynucleotides, releasing free uracil.. Its function is as follows. Excises uracil residues from the DNA which can arise as a result of misincorporation of dUMP residues by DNA polymerase or deamination of cytosines. Therefore may reduce deleterious uracil incorporation into the viral genome, particularly in terminally differentiated cells which lack DNA repair enzymes. In Varicella-zoster virus (strain Dumas) (HHV-3), this protein is Uracil-DNA glycosylase.